Reading from the N-terminus, the 406-residue chain is E3 ubiquitin-protein ligase RING1 (406 aa).

Thr-24 is subject to Phosphothreonine. The segment at 30 to 234 (MDGTEIAVSP…GGAGSEDSGD (205 aa)) is necessary for transcriptional repression. A Phosphoserine modification is found at Ser-38. Residues 48–88 (CPICLDMLKNTMTTKECLHRFCSDCIVTALRSGNKECPTCR) form an RING-type zinc finger. Ser-140, Ser-187, and Ser-190 each carry phosphoserine. Disordered stretches follow at residues 148-263 (QAMH…GEIE) and 309-354 (QQQE…PSLE). Acidic residues predominate over residues 175–187 (EPGEGEGDGEDVS). The short motif at 201–204 (KRPR) is the Nuclear localization signal element. Positions 205–228 (GGGAGGSSVGTGGGGTGGVGGGAG) are enriched in gly residues. Residues Thr-215 and Thr-220 each carry the phosphothreonine modification. Residues Ser-229 and Ser-232 each carry the phosphoserine modification. The tract at residues 230-406 (EDSGDRGGTL…LCYAPTKDPK (177 aa)) is necessary for interaction with CBX2. Residues 235 to 244 (RGGTLGGGTL) are compositionally biased toward gly residues. The segment covering 246–258 (PPSPPGAPSPPEP) has biased composition (pro residues). A phosphoserine mark is found at Ser-248 and Ser-254. Residues 315 to 343 (EPGGPGGGASDTGGPDGCGGEGGGAGGGD) are compositionally biased toward gly residues.

In terms of assembly, component of chromatin-associated Polycomb (PcG) complexes. Interacts with BMI1. Part of the E2F6.com-1 complex in G0 phase composed of E2F6, MGA, MAX, TFDP1, CBX3, BAT8, EUHMTASE1, RING1, RNF2/RING2 MBLR, L3MBTL2 and YAF2. Interacts with CBX2 and PCGF6. Component of a PRC1-like complex. Component of repressive BCOR complex containing Polycomb group subcomplex at least composed of RYBP, PCGF1, BCOR and RNF2/RING2. Interacts with PCGF2, RNF2; CBX6, CBX7 and CBX8. Interacts with PHC2. Interacts with MN1. Interacts with USP26.

The protein localises to the nucleus. It localises to the nucleus speckle. It catalyses the reaction S-ubiquitinyl-[E2 ubiquitin-conjugating enzyme]-L-cysteine + [acceptor protein]-L-lysine = [E2 ubiquitin-conjugating enzyme]-L-cysteine + N(6)-ubiquitinyl-[acceptor protein]-L-lysine.. It functions in the pathway protein modification; protein ubiquitination. Constitutes one of the E3 ubiquitin-protein ligases that mediate monoubiquitination of 'Lys-119' of histone H2A, thereby playing a central role in histone code and gene regulation. H2A 'Lys-119' ubiquitination gives a specific tag for epigenetic transcriptional repression and participates in X chromosome inactivation of female mammals. Essential component of a Polycomb group (PcG) multiprotein PRC1-like complex, a complex class required to maintain the transcriptionally repressive state of many genes, including Hox genes, throughout development. PcG PRC1 complex acts via chromatin remodeling and modification of histones, rendering chromatin heritably changed in its expressibility. Compared to RNF2/RING2, it does not have the main E3 ubiquitin ligase activity on histone H2A, and it may rather act as a modulator of RNF2/RING2 activity. This chain is E3 ubiquitin-protein ligase RING1, found in Homo sapiens (Human).